The following is a 507-amino-acid chain: UDP-N-acetylhexosamine pyrophosphorylase-like protein 1 (507 aa).

The interval 56–91 (ACARPHGPPPDLAARLRPLPPERVGRASRSDPETRR) is disordered. The span at 78-91 (RVGRASRSDPETRR) shows a compositional bias: basic and acidic residues. The Substrate binding motif lies at 111–114 (LAGG). Residues 111-114 (LAGG), lysine 125, glutamine 199, and glycine 225 each bind UTP. Position 226 (asparagine 226) interacts with substrate. Residue aspartate 256 coordinates UTP. The Substrate binding signature appears at 306–307 (EY). A UTP-binding site is contributed by lysine 380. Lysine 410 provides a ligand contact to substrate.

This sequence belongs to the UDPGP type 1 family.

The protein is UDP-N-acetylhexosamine pyrophosphorylase-like protein 1 (UAP1L1) of Homo sapiens (Human).